A 475-amino-acid chain; its full sequence is GlcNAc-binding protein A (475 aa).

Positions 1–27 (MPKLTQLSLVTLALTAGSTLVSQTASA) are cleaved as a signal peptide. Positions 28–195 (HGYVVSPESR…SFYNAIDVNF (168 aa)) constitute a Chitin-binding type-4 domain. The Chitin-binding type-3 domain occupies 426 to 468 (AGTKVLQPKTGKVYQCKPWPYNGYCVQWSPTATGFEPGIGNSW).

The protein belongs to the GbpA family.

It localises to the secreted. In terms of biological role, probably interacts with GlcNAc residues. May promote attachment to both epithelial cell surfaces and chitin. This is GlcNAc-binding protein A from Shewanella oneidensis (strain ATCC 700550 / JCM 31522 / CIP 106686 / LMG 19005 / NCIMB 14063 / MR-1).